Reading from the N-terminus, the 367-residue chain is Probable neutral protease 2 homolog MCYG_00239 (367 aa).

A signal peptide spans 1–19 (MQVLVALAALSSLAAPVVG). Residues 20–190 (FSIPRGVPVS…DGPFTRIDKR (171 aa)) constitute a propeptide that is removed on maturation. Intrachain disulfides connect cysteine 198-cysteine 268, cysteine 275-cysteine 293, and cysteine 307-cysteine 367. Residue histidine 318 participates in Zn(2+) binding. The active site involves glutamate 319. Histidine 322 and aspartate 333 together coordinate Zn(2+).

The protein belongs to the peptidase M35 family. It depends on Zn(2+) as a cofactor.

Its subcellular location is the secreted. It catalyses the reaction Preferential cleavage of bonds with hydrophobic residues in P1'. Also 3-Asn-|-Gln-4 and 8-Gly-|-Ser-9 bonds in insulin B chain.. Functionally, probable secreted metalloprotease that shows high activities on basic nuclear substrates such as histone and protamine. May be involved in virulence. The protein is Probable neutral protease 2 homolog MCYG_00239 of Arthroderma otae (strain ATCC MYA-4605 / CBS 113480) (Microsporum canis).